Consider the following 280-residue polypeptide: tRNA (guanine-N(1)-)-methyltransferase (280 aa).

Positions 71–94 are disordered; it reads DDVSSGTASTQDLQSALPHLSKPR. Over residues 74-84 the composition is skewed to polar residues; the sequence is SSGTASTQDLQ. Residues G146 and 170-175 contribute to the S-adenosyl-L-methionine site; that span reads IGDYVL.

This sequence belongs to the RNA methyltransferase TrmD family. As to quaternary structure, homodimer.

The protein localises to the cytoplasm. It carries out the reaction guanosine(37) in tRNA + S-adenosyl-L-methionine = N(1)-methylguanosine(37) in tRNA + S-adenosyl-L-homocysteine + H(+). Functionally, specifically methylates guanosine-37 in various tRNAs. The polypeptide is tRNA (guanine-N(1)-)-methyltransferase (Corynebacterium aurimucosum (strain ATCC 700975 / DSM 44827 / CIP 107346 / CN-1) (Corynebacterium nigricans)).